The chain runs to 558 residues: Glucose-6-phosphate isomerase (558 aa).

Residue Ala2 is modified to N-acetylalanine. The residue at position 12 (Lys12) is an N6-acetyllysine. N6-(2-hydroxyisobutyryl)lysine is present on Lys34. A Phosphoserine modification is found at Ser107. Position 109 is a phosphothreonine (Thr109). Position 142 is an N6-acetyllysine (Lys142). Position 159–160 (159–160) interacts with D-glucose 6-phosphate; that stretch reads GS. A Phosphoserine; by CK2 modification is found at Ser185. Residue 210 to 215 participates in D-glucose 6-phosphate binding; that stretch reads SKTFTT. At Thr250 the chain carries Phosphothreonine. The D-glucose 6-phosphate site is built by Gln354, Glu358, and His389. Glu358 acts as the Proton donor in catalysis. Residue His389 is part of the active site. Position 454 is an N6-acetyllysine; alternate (Lys454). Lys454 is subject to N6-malonyllysine; alternate. At Lys454 the chain carries N6-succinyllysine; alternate. Ser455 is subject to Phosphoserine. Lys519 provides a ligand contact to D-glucose 6-phosphate. Residue Lys519 is part of the active site.

This sequence belongs to the GPI family. In terms of assembly, homodimer in the catalytically active form, monomer in the secreted form. Phosphorylation at Ser-185 by CK2 has been shown to decrease enzymatic activity and may contribute to secretion by a non-classical secretory pathway. In terms of processing, ISGylated.

It is found in the cytoplasm. The protein resides in the secreted. It carries out the reaction alpha-D-glucose 6-phosphate = beta-D-fructose 6-phosphate. The protein operates within carbohydrate degradation; glycolysis; D-glyceraldehyde 3-phosphate and glycerone phosphate from D-glucose: step 2/4. In terms of biological role, in the cytoplasm, catalyzes the conversion of glucose-6-phosphate to fructose-6-phosphate, the second step in glycolysis, and the reverse reaction during gluconeogenesis. Besides it's role as a glycolytic enzyme, also acts as a secreted cytokine: acts as an angiogenic factor (AMF) that stimulates endothelial cell motility. Acts as a neurotrophic factor, neuroleukin, for spinal and sensory neurons. It is secreted by lectin-stimulated T-cells and induces immunoglobulin secretion. The protein is Glucose-6-phosphate isomerase of Sus scrofa (Pig).